The chain runs to 674 residues: L-type lectin-domain containing receptor kinase SIT1 (674 aa).

The signal sequence occupies residues 1–27 (MRRPELIMRSLPLILFLSLGSFHLAAA). The Extracellular segment spans residues 28–301 (AVDDQFTFDG…IARAPSNVLK (274 aa)). Positions 31-275 (DQFTFDGFAG…VLAWSFKMDG (245 aa)) are legume-lectin like. N-linked (GlcNAc...) asparagine glycans are attached at residues Asn42, Asn61, Asn143, Asn196, Asn219, Asn240, and Asn281. Residues 302–322 (ILLPIASAALVSALAIAVLVI) form a helical membrane-spanning segment. Residues 323-674 (HRRRRRYAEL…GNISDIPRAR (352 aa)) are Cytoplasmic-facing. Positions 357 to 636 (FSDERLLGFG…LDGAMPLPEL (280 aa)) constitute a Protein kinase domain. ATP contacts are provided by residues 363 to 371 (LGFGGFGRV) and Lys386. Asp482 functions as the Proton acceptor in the catalytic mechanism. Residues Thr511, Thr515, Thr516, and Thr521 each carry the phosphothreonine modification.

In the C-terminal section; belongs to the protein kinase superfamily. Ser/Thr protein kinase family. This sequence in the N-terminal section; belongs to the leguminous lectin family. Interacts with B'KAPPA. In terms of processing, autophosphorylated at Thr-511, Thr-515 or Thr-516, and Thr-521 in response to salt stress. Dephosphorylated by phosphatase 2A in response to salt stress. In terms of tissue distribution, expressed in root epidermal cells.

The protein resides in the cell membrane. It catalyses the reaction L-seryl-[protein] + ATP = O-phospho-L-seryl-[protein] + ADP + H(+). The enzyme catalyses L-threonyl-[protein] + ATP = O-phospho-L-threonyl-[protein] + ADP + H(+). Its activity is regulated as follows. Activated by autophosphorylation in response to salt stress. In terms of biological role, lectin-domain containing receptor kinase involved in salt stress response. Acts as a negative regulator of salt tolerance. Mediates salt sensitivity by phosphorylating and activating MPK3 and MPK6. Promotes ethylene production and mediates salt-induced ethylene signaling. Promotes the accumulation of reactive oxygen species (ROS) under salt stress conditions. Its kinase activity is triggered by salt stress and is required for its function in salt stress response. Phosphorylates B'KAPPA, a B regulatory subunit of phosphatase 2A (PP2A). The chain is L-type lectin-domain containing receptor kinase SIT1 from Oryza sativa subsp. japonica (Rice).